The chain runs to 297 residues: Nitrogenase iron protein 2 (297 aa).

G14–S21 provides a ligand contact to ATP. Residue C102 coordinates [4Fe-4S] cluster. At R105 the chain carries ADP-ribosylarginine; by dinitrogenase reductase ADP-ribosyltransferase. C136 lines the [4Fe-4S] cluster pocket.

This sequence belongs to the NifH/BchL/ChlL family. As to quaternary structure, homodimer. Requires [4Fe-4S] cluster as cofactor. In terms of processing, the reversible ADP-ribosylation of Arg-105 inactivates the nitrogenase reductase and regulates nitrogenase activity.

The enzyme catalyses N2 + 8 reduced [2Fe-2S]-[ferredoxin] + 16 ATP + 16 H2O = H2 + 8 oxidized [2Fe-2S]-[ferredoxin] + 2 NH4(+) + 16 ADP + 16 phosphate + 6 H(+). Its function is as follows. The key enzymatic reactions in nitrogen fixation are catalyzed by the nitrogenase complex, which has 2 components: the iron protein and the molybdenum-iron protein. This chain is Nitrogenase iron protein 2 (nifH2), found in Nostoc sp. (strain PCC 7120 / SAG 25.82 / UTEX 2576).